The primary structure comprises 274 residues: tRNA-cytidine(32) 2-sulfurtransferase (274 aa).

The short motif at 40–45 is the PP-loop motif element; that stretch reads SGGKDS. Residues C115, C118, and C206 each contribute to the [4Fe-4S] cluster site.

The protein belongs to the TtcA family. Homodimer. It depends on Mg(2+) as a cofactor. The cofactor is [4Fe-4S] cluster.

Its subcellular location is the cytoplasm. The catalysed reaction is cytidine(32) in tRNA + S-sulfanyl-L-cysteinyl-[cysteine desulfurase] + AH2 + ATP = 2-thiocytidine(32) in tRNA + L-cysteinyl-[cysteine desulfurase] + A + AMP + diphosphate + H(+). Its pathway is tRNA modification. Catalyzes the ATP-dependent 2-thiolation of cytidine in position 32 of tRNA, to form 2-thiocytidine (s(2)C32). The sulfur atoms are provided by the cysteine/cysteine desulfurase (IscS) system. The chain is tRNA-cytidine(32) 2-sulfurtransferase from Pseudomonas putida (strain W619).